A 385-amino-acid chain; its full sequence is Lipid-A-disaccharide synthase 2 (385 aa).

The protein belongs to the LpxB family.

The catalysed reaction is a lipid X + a UDP-2-N,3-O-bis[(3R)-3-hydroxyacyl]-alpha-D-glucosamine = a lipid A disaccharide + UDP + H(+). The protein operates within bacterial outer membrane biogenesis; LPS lipid A biosynthesis. In terms of biological role, condensation of UDP-2,3-diacylglucosamine and 2,3-diacylglucosamine-1-phosphate to form lipid A disaccharide, a precursor of lipid A, a phosphorylated glycolipid that anchors the lipopolysaccharide to the outer membrane of the cell. This chain is Lipid-A-disaccharide synthase 2, found in Legionella pneumophila (strain Paris).